The following is a 1400-amino-acid chain: DNA-directed RNA polymerase subunit beta' (1400 aa).

4 residues coordinate Zn(2+): Cys71, Cys73, Cys86, and Cys89. Residues Asp462, Asp464, and Asp466 each contribute to the Mg(2+) site. The Zn(2+) site is built by Cys811, Cys885, Cys892, and Cys895.

This sequence belongs to the RNA polymerase beta' chain family. In terms of assembly, the RNAP catalytic core consists of 2 alpha, 1 beta, 1 beta' and 1 omega subunit. When a sigma factor is associated with the core the holoenzyme is formed, which can initiate transcription. Mg(2+) is required as a cofactor. The cofactor is Zn(2+).

It carries out the reaction RNA(n) + a ribonucleoside 5'-triphosphate = RNA(n+1) + diphosphate. Functionally, DNA-dependent RNA polymerase catalyzes the transcription of DNA into RNA using the four ribonucleoside triphosphates as substrates. In Brucella ovis (strain ATCC 25840 / 63/290 / NCTC 10512), this protein is DNA-directed RNA polymerase subunit beta'.